A 33-amino-acid polypeptide reads, in one-letter code: LSLGTIKKLLQILAQGLKAICNHRDLIAKGCQA.

Belongs to the myrmexin family. In terms of assembly, heterodimer composed of subunit LS1 and subunit SS1 (U1-PSDTX-Pt1b), heterodimer composed of subunit LS1 and SS2 (U1-PSDTX-Pt1b), and heterodimer composed of subunit LS1 and SS3; disulfide-linked. As to expression, expressed by the venom gland.

The protein resides in the secreted. In terms of biological role, this heterodimer may have anti-inflammatory properties, since the myrmexin complex (composed of 6 SS-LS heterodimers) inhibits carrageenin-induced edema in a dose-dependent manner (after subcutaneous injection into rats). This Pseudomyrmex triplarinus (Ant) protein is U1-pseudomyrmecitoxin-Pt1 subunit LS1.